The primary structure comprises 647 residues: Macrolide export ATP-binding/permease protein MacB (647 aa).

The 239-residue stretch at 6–244 folds into the ABC transporter domain; the sequence is LEISGCYRTF…VDTAVTKINN (239 aa). An ATP-binding site is contributed by 42–49; that stretch reads GASGSGKS. The next 4 membrane-spanning stretches (helical) occupy residues 273–293, 522–542, 577–597, and 612–632; these read FLTM…VALG, LLIS…VMNI, LVCL…GVVF, and SIVA…FLPA.

This sequence belongs to the ABC transporter superfamily. Macrolide exporter (TC 3.A.1.122) family. Homodimer. Part of the tripartite efflux system MacAB-TolC, which is composed of an inner membrane transporter, MacB, a periplasmic membrane fusion protein, MacA, and an outer membrane component, TolC. The complex forms a large protein conduit and can translocate molecules across both the inner and outer membranes. Interacts with MacA.

The protein resides in the cell inner membrane. Its function is as follows. Part of the tripartite efflux system MacAB-TolC. MacB is a non-canonical ABC transporter that contains transmembrane domains (TMD), which form a pore in the inner membrane, and an ATP-binding domain (NBD), which is responsible for energy generation. Confers resistance against macrolides. The sequence is that of Macrolide export ATP-binding/permease protein MacB from Shewanella sp. (strain W3-18-1).